The chain runs to 265 residues: Tryptophan synthase alpha chain (265 aa).

Residues Glu-49 and Asp-60 each act as proton acceptor in the active site.

This sequence belongs to the TrpA family. In terms of assembly, tetramer of two alpha and two beta chains.

It catalyses the reaction (1S,2R)-1-C-(indol-3-yl)glycerol 3-phosphate + L-serine = D-glyceraldehyde 3-phosphate + L-tryptophan + H2O. It participates in amino-acid biosynthesis; L-tryptophan biosynthesis; L-tryptophan from chorismate: step 5/5. In terms of biological role, the alpha subunit is responsible for the aldol cleavage of indoleglycerol phosphate to indole and glyceraldehyde 3-phosphate. The sequence is that of Tryptophan synthase alpha chain from Cupriavidus pinatubonensis (strain JMP 134 / LMG 1197) (Cupriavidus necator (strain JMP 134)).